A 634-amino-acid polypeptide reads, in one-letter code: Growth hormone receptor (634 aa).

An N-terminal signal peptide occupies residues 1 to 18; it reads MDLWQLLLTLAVAGSSDA. Over 19 to 260 the chain is Extracellular; that stretch reads FSGSEATPAF…NPSACEEDFQ (242 aa). N-linked (GlcNAc...) asparagine glycosylation is present at Asn46. The cysteines at positions 56 and 66 are disulfide-linked. N-linked (GlcNAc...) asparagine glycosylation is present at Asn73. Cys97 and Cys108 are oxidised to a cystine. Asn111 carries N-linked (GlcNAc...) asparagine glycosylation. An intrachain disulfide couples Cys122 to Cys136. Residues 147 to 250 form the Fibronectin type-III domain; that stretch reads PPVGLNWTLL…EVLLITFPQM (104 aa). N-linked (GlcNAc...) asparagine glycans are attached at residues Asn152, Asn157, and Asn196. A WSXWS motif motif is present at residues 236 to 240; that stretch reads YGKFS. A helical membrane pass occupies residues 261–284; sequence FPWFLIIIFGILGLTVTLFLLIFS. Residues 285–634 lie on the Cytoplasmic side of the membrane; that stretch reads KQQRIKMLIL…STDQLNKIMP (350 aa). The interval 290-375 is required for JAK2 binding; the sequence is KMLILPPVPV…HEKSLSIFGA (86 aa). The Box 1 motif signature appears at 293 to 301; it reads ILPPVPVPK. Positions 336–345 match the UbE motif motif; that stretch reads DSWVEFIELD. Residue Ser337 is modified to Phosphoserine. The segment at 451–471 is disordered; that stretch reads KPRPLPIGGTESTHQAVHTQL. Residues 460-471 are compositionally biased toward polar residues; the sequence is TESTHQAVHTQL. A phosphotyrosine mark is found at Tyr483 and Tyr591.

This sequence belongs to the type I cytokine receptor family. Type 1 subfamily. As to quaternary structure, on growth hormone (GH) binding, forms homodimers and binds JAK2 via a box 1-containing domain. The soluble form (GHBP) is produced by phorbol ester-promoted proteolytic cleavage at the cell surface (shedding) by ADAM17/TACE. Shedding is inhibited by growth hormone (GH) binding to the receptor probably due to a conformational change in GHR rendering the receptor inaccessible to ADAM17. In terms of processing, on GH binding, phosphorylated on tyrosine residues in the cytoplasmic domain by JAK2. Post-translationally, ubiquitinated by the ECS(SOCS2) complex following ligand-binding and phosphorylation by JAK2, leading to its degradation by the proteasome. Regulation by the ECS(SOCS2) complex acts as a negative feedback loop of growth hormone receptor signaling. Ubiquitination is not sufficient for GHR internalization.

Its subcellular location is the cell membrane. It is found in the secreted. Receptor for pituitary gland growth hormone (GH1) involved in regulating postnatal body growth. On ligand binding, couples to the JAK2/STAT5 pathway. In terms of biological role, the soluble form (GHBP) acts as a reservoir of growth hormone in plasma and may be a modulator/inhibitor of GH signaling. The sequence is that of Growth hormone receptor (GHR) from Ovis aries (Sheep).